We begin with the raw amino-acid sequence, 167 residues long: Stress-related protein (167 aa).

This sequence belongs to the REF/SRPP family.

Its function is as follows. Plays a role in plant defense. The protein is Stress-related protein (SRP) of Phaseolus vulgaris (Kidney bean).